A 190-amino-acid polypeptide reads, in one-letter code: Orotate phosphoribosyltransferase (190 aa).

114-122 (EDVVTTGGS) serves as a coordination point for 5-phospho-alpha-D-ribose 1-diphosphate. Positions 118 and 146 each coordinate orotate.

This sequence belongs to the purine/pyrimidine phosphoribosyltransferase family. PyrE subfamily. Homodimer. It depends on Mg(2+) as a cofactor.

It catalyses the reaction orotidine 5'-phosphate + diphosphate = orotate + 5-phospho-alpha-D-ribose 1-diphosphate. Its pathway is pyrimidine metabolism; UMP biosynthesis via de novo pathway; UMP from orotate: step 1/2. In terms of biological role, catalyzes the transfer of a ribosyl phosphate group from 5-phosphoribose 1-diphosphate to orotate, leading to the formation of orotidine monophosphate (OMP). The chain is Orotate phosphoribosyltransferase from Thermoanaerobacter sp. (strain X514).